A 62-amino-acid chain; its full sequence is Teretoxin Tsu1.1 (62 aa).

The N-terminal stretch at 1–21 (MSCFPVLFVMMLLASQSVWAF) is a signal peptide. The propeptide occupies 22–40 (PEPETRIGTARDAESMGVR).

The protein belongs to the teretoxin A (TA) superfamily. Post-translationally, contains 2 disulfide bonds. Expressed by the venom duct.

It localises to the secreted. This Terebra subulata (Chocolate spotted auger) protein is Teretoxin Tsu1.1.